Reading from the N-terminus, the 467-residue chain is Ran-binding protein M homolog (467 aa).

The interval M1–L25 is disordered. The span at N9 to L25 shows a compositional bias: polar residues. The B30.2/SPRY domain maps to D31–F219. Positions P244–V276 constitute a LisH domain. The CTLH domain maps to A295–E353.

Belongs to the RANBP9/10 family. Interacts with WDR36, WDS, GID8, MAEA and RMD5.

The protein localises to the cytoplasm. The protein resides in the nucleus. Its subcellular location is the perinuclear region. The sequence is that of Ran-binding protein M homolog from Arabidopsis thaliana (Mouse-ear cress).